Reading from the N-terminus, the 430-residue chain is Glycine reductase complex component B subunits alpha and beta (430 aa).

Cys242 functions as the Schiff-base intermediate with substrate; via pyruvic acid in the catalytic mechanism. Position 242 is a pyruvic acid (Cys) (Cys242).

In terms of assembly, heterohexamer of two alpha, two beta and two gamma subunits. Component of the glycine reductase complex, together with components A and C. PB is substrate specific. In terms of processing, the peptide chain is cleaved into beta and alpha chains, and the alpha chain N-terminal cysteine is deaminated and oxidized to form a reactive pyruvoyl group.

It carries out the reaction acetyl phosphate + [thioredoxin]-disulfide + NH4(+) + H2O = [thioredoxin]-dithiol + glycine + phosphate + H(+). In the first step of glycine reductase, the substrate is bound to component PB via a Schiff base intermediate. Then the PB-activated substrate is nucleophilically attacked by the selenol anion of component PA to transform it to a carboxymethylated selenoether and the respective amine. By action of component PC, acetyl phosphate is formed, leaving component PA in its oxidized state. Finally component PA becomes reduced by the thioredoxin system to start a new catalytic cycle of reductive deamination. This Acetoanaerobium sticklandii (strain ATCC 12662 / DSM 519 / JCM 1433 / CCUG 9281 / NCIMB 10654 / HF) (Clostridium sticklandii) protein is Glycine reductase complex component B subunits alpha and beta (grdE).